Reading from the N-terminus, the 275-residue chain is 3-methyl-2-oxobutanoate hydroxymethyltransferase (275 aa).

Mg(2+) is bound by residues D44 and D83. Residues 44–45 (DS), D83, and K113 contribute to the 3-methyl-2-oxobutanoate site. A Mg(2+)-binding site is contributed by E115. The active-site Proton acceptor is E182.

This sequence belongs to the PanB family. Homodecamer; pentamer of dimers. Mg(2+) serves as cofactor.

The protein localises to the cytoplasm. The catalysed reaction is 3-methyl-2-oxobutanoate + (6R)-5,10-methylene-5,6,7,8-tetrahydrofolate + H2O = 2-dehydropantoate + (6S)-5,6,7,8-tetrahydrofolate. The protein operates within cofactor biosynthesis; (R)-pantothenate biosynthesis; (R)-pantoate from 3-methyl-2-oxobutanoate: step 1/2. Functionally, catalyzes the reversible reaction in which hydroxymethyl group from 5,10-methylenetetrahydrofolate is transferred onto alpha-ketoisovalerate to form ketopantoate. This is 3-methyl-2-oxobutanoate hydroxymethyltransferase from Clostridium novyi (strain NT).